Here is a 141-residue protein sequence, read N- to C-terminus: Hemoglobin subunit alpha (141 aa).

The Globin domain maps to 1-141 (VLSSADKANI…VSTVLTSKYR (141 aa)). A Phosphoserine modification is found at serine 3. Residues lysine 7 and lysine 11 each carry the N6-succinyllysine modification. Residue lysine 16 is modified to N6-acetyllysine; alternate. Lysine 16 is subject to N6-succinyllysine; alternate. Tyrosine 24 carries the post-translational modification Phosphotyrosine. N6-succinyllysine is present on lysine 40. A Phosphoserine modification is found at serine 49. Histidine 58 contributes to the O2 binding site. Histidine 87 provides a ligand contact to heme b. Serine 102 carries the phosphoserine modification. Threonine 108 is subject to Phosphothreonine. A phosphoserine mark is found at serine 124 and serine 131. 2 positions are modified to phosphothreonine: threonine 134 and threonine 137. Serine 138 carries the phosphoserine modification.

This sequence belongs to the globin family. In terms of assembly, heterotetramer of two alpha chains and two beta chains. In terms of tissue distribution, red blood cells.

Involved in oxygen transport from the lung to the various peripheral tissues. In terms of biological role, hemopressin acts as an antagonist peptide of the cannabinoid receptor CNR1. Hemopressin-binding efficiently blocks cannabinoid receptor CNR1 and subsequent signaling. This chain is Hemoglobin subunit alpha (HBA), found in Proteles cristata (Aardwolf).